Here is a 351-residue protein sequence, read N- to C-terminus: Phosphoribosylformylglycinamidine cyclo-ligase (351 aa).

This sequence belongs to the AIR synthase family.

The protein localises to the cytoplasm. The catalysed reaction is 2-formamido-N(1)-(5-O-phospho-beta-D-ribosyl)acetamidine + ATP = 5-amino-1-(5-phospho-beta-D-ribosyl)imidazole + ADP + phosphate + H(+). Its pathway is purine metabolism; IMP biosynthesis via de novo pathway; 5-amino-1-(5-phospho-D-ribosyl)imidazole from N(2)-formyl-N(1)-(5-phospho-D-ribosyl)glycinamide: step 2/2. The protein is Phosphoribosylformylglycinamidine cyclo-ligase of Burkholderia lata (strain ATCC 17760 / DSM 23089 / LMG 22485 / NCIMB 9086 / R18194 / 383).